The sequence spans 245 residues: Probable phosphatase YcdX (245 aa).

9 residues coordinate Zn(2+): H7, H9, H15, H40, E73, H101, H131, D192, and H194.

Belongs to the PHP family. As to quaternary structure, homotrimer. Zn(2+) is required as a cofactor.

This Escherichia coli O17:K52:H18 (strain UMN026 / ExPEC) protein is Probable phosphatase YcdX.